The chain runs to 313 residues: E3 ubiquitin-protein ligase RNF126 (313 aa).

A2 is modified (N-acetylalanine). Phosphoserine is present on S5. The interval 5 to 100 (SPQPGRYFCH…FEIPTFPPGA (96 aa)) is required for interaction with BAG6. Zn(2+)-binding residues include C13, C16, C29, and C32. The C4-type zinc finger occupies 13–32 (CHCCSVEIVPRLPDYICPRC). 2 disordered regions span residues 42 to 63 (EETR…QNRQ) and 95 to 128 (TFPP…RQPR). Polar residues predominate over residues 47–63 (TENGSAPSTAPTDQNRQ). A compositionally biased stretch (basic and acidic residues) spans 103 to 116 (DDGRDPESRREREH). The span at 117 to 128 (QSRHRYGARQPR) shows a compositional bias: basic residues. Residues 202–306 (TGPPPADKEK…SSSSSSSPSN (105 aa)) are sufficient for interaction with AICDA. An RING-type zinc finger spans residues 231–272 (CPVCKEDYALGESVRQLPCNHLFHDSCIVPWLEQHDSCPVCR). Residues 279 to 313 (NTATNPPGLTGVGFSSSSSSSSSSSPSNENATSNS) form a disordered region. Over residues 293 to 313 (SSSSSSSSSSSPSNENATSNS) the composition is skewed to low complexity.

Interacts with CCDC50, EGFR, FLT3 and SCAMP3. Interacts with BAG6 (via ubiquitin-like domain); required for BAG6-dependent ubiquitination of proteins mislocalized to the cytosol. Interacts with CDKN1A. Interacts with AICDA. Post-translationally, ubiquitinated. May undergo autoubiquitination. Detected in B-cells (at protein level).

The protein localises to the cytoplasm. The protein resides in the nucleus. The catalysed reaction is S-ubiquitinyl-[E2 ubiquitin-conjugating enzyme]-L-cysteine + [acceptor protein]-L-lysine = [E2 ubiquitin-conjugating enzyme]-L-cysteine + N(6)-ubiquitinyl-[acceptor protein]-L-lysine.. It participates in protein modification; protein ubiquitination. In terms of biological role, E3 ubiquitin-protein ligase that mediates ubiquitination oF target proteins. Depending on the associated E2 ligase, mediates 'Lys-27'-, 'Lys-29'-, 'Lys-48'- and/or 'Lys-63'-linked polyubiquitination of substrates. Part of a BAG6-dependent quality control process ensuring that proteins of the secretory pathway that are mislocalized to the cytosol are degraded by the proteasome. Probably acts by providing the ubiquitin ligase activity associated with the BAG6 complex and be responsible for ubiquitination of the hydrophobic mislocalized proteins and their targeting to the proteasome. May also play a role in the endosomal recycling of IGF2R, the cation-independent mannose-6-phosphate receptor. May play a role in the endosomal sorting and degradation of several membrane receptors including EGFR, FLT3, MET and CXCR4, by mediating their ubiquitination. By ubiquitinating CDKN1A/p21 and targeting it for degradation, may also promote cell proliferation. May monoubiquitinate AICDA. Acts as a regulator of DNA repair by mediating 'Lys-27'- and 'Lys-29'-linked polyubiquitination of MRE11, thereby promoting the exonuclease activity of MRE11. The sequence is that of E3 ubiquitin-protein ligase RNF126 from Mus musculus (Mouse).